Here is a 276-residue protein sequence, read N- to C-terminus: NAD kinase (276 aa).

Asp61 acts as the Proton acceptor in catalysis. Residues 61 to 62, 134 to 135, Arg145, Lys162, Asp164, Val172, 175 to 180, and Gln234 each bind NAD(+); these read DG, ND, and TAYSFS.

It belongs to the NAD kinase family. It depends on a divalent metal cation as a cofactor.

It is found in the cytoplasm. It catalyses the reaction NAD(+) + ATP = ADP + NADP(+) + H(+). In terms of biological role, involved in the regulation of the intracellular balance of NAD and NADP, and is a key enzyme in the biosynthesis of NADP. Catalyzes specifically the phosphorylation on 2'-hydroxyl of the adenosine moiety of NAD to yield NADP. The polypeptide is NAD kinase (Clostridium perfringens (strain 13 / Type A)).